Consider the following 320-residue polypeptide: Heterogeneous nuclear ribonucleoprotein A1 (320 aa).

At M1 the chain carries N-acetylmethionine. S2 is modified (N-acetylserine; in Heterogeneous nuclear ribonucleoprotein A1, N-terminally processed). Phosphoserine is present on S2. K3 carries the N6-acetyllysine; alternate modification. A Glycyl lysine isopeptide (Lys-Gly) (interchain with G-Cter in SUMO2); alternate cross-link involves residue K3. A phosphoserine mark is found at S4 and S6. The globular A domain stretch occupies residues 4-94 (SESPKEPEQL…EPKRAVSRED (91 aa)). K8 is covalently cross-linked (Glycyl lysine isopeptide (Lys-Gly) (interchain with G-Cter in SUMO2)). 2 RRM domains span residues 14–97 (RKLF…DSQR) and 105–184 (KKIF…LSKQ). S22 is modified (phosphoserine). Residue K78 forms a Glycyl lysine isopeptide (Lys-Gly) (interchain with G-Cter in SUMO2) linkage. A globular B domain region spans residues 95-185 (SQRPGAHLTV…EVRKALSKQE (91 aa)). Residue K113 forms a Glycyl lysine isopeptide (Lys-Gly) (interchain with G-Cter in SUMO) linkage. Glycyl lysine isopeptide (Lys-Gly) (interchain with G-Cter in SUMO2) cross-links involve residues K179 and K183. A disordered region spans residues 182–216 (SKQEMASASSSQRGRSGSGNFGGGRGGGFGGNDNF). At S192 the chain carries Phosphoserine; by MKNK2. R194 is subject to Asymmetric dimethylarginine; alternate. R194 carries the dimethylated arginine; alternate modification. Position 194 is an omega-N-methylarginine; alternate (R194). Residues 197-216 (SGSGNFGGGRGGGFGGNDNF) are compositionally biased toward gly residues. Residue S199 is modified to Phosphoserine. 4 positions are modified to asymmetric dimethylarginine; alternate: R206, R218, R225, and R232. Position 206 is a dimethylated arginine; alternate (R206). Omega-N-methylarginine; alternate is present on residues R206, R218, R225, and R232. The segment at 218 to 240 (RGGNFSGRGGFGGSRGGGGYGGS) is RNA-binding RGG-box. Position 225 is a dimethylated arginine; alternate (R225). The segment at 268–305 (NQSSNFGPMKGGNFGGRSSGPYGGGGQYFAKPRNQGGY) is nuclear targeting sequence. Residues 274-320 (GPMKGGNFGGRSSGPYGGGGQYFAKPRNQGGYGGSSSSSSYGSGRRF) form a disordered region. Positions 276–294 (MKGGNFGGRSSGPYGGGGQ) are enriched in gly residues. R284 bears the Omega-N-methylarginine mark. Position 285 is a phosphoserine (S285). K298 is modified (N6-acetyllysine; alternate). K298 participates in a covalent cross-link: Glycyl lysine isopeptide (Lys-Gly) (interchain with G-Cter in SUMO2); alternate. Residue R300 is modified to Omega-N-methylarginine. Positions 308–320 (SSSSSSYGSGRRF) are enriched in low complexity. Position 309 is a phosphoserine (S309). S310, S311, and S312 each carry phosphoserine; by MKNK2. Phosphoserine is present on residues S313 and S316. Omega-N-methylarginine is present on R318.

Identified in the spliceosome C complex. Identified in a IGF2BP1-dependent mRNP granule complex containing untranslated mRNAs. Interacts with SEPT6. Interacts with C9orf72. Interacts with KHDRBS1. Interacts with UBQLN2. Interacts with PPIA/CYPA. Sumoylated.

The protein resides in the nucleus. Its subcellular location is the cytoplasm. Involved in the packaging of pre-mRNA into hnRNP particles, transport of poly(A) mRNA from the nucleus to the cytoplasm and modulation of splice site selection. Plays a role in the splicing of pyruvate kinase PKM by binding repressively to sequences flanking PKM exon 9, inhibiting exon 9 inclusion and resulting in exon 10 inclusion and production of the PKM M2 isoform. Binds to the IRES and thereby inhibits the translation of the apoptosis protease activating factor APAF1. May bind to specific miRNA hairpins. This Mus musculus (Mouse) protein is Heterogeneous nuclear ribonucleoprotein A1 (Hnrnpa1).